The primary structure comprises 300 residues: Formate dehydrogenase-O iron-sulfur subunit (300 aa).

At 1 to 260 (MAYQSQDIIR…KFWKGIWKPL (260 aa)) the chain is on the cytoplasmic side. 4 consecutive 4Fe-4S ferredoxin-type domains span residues 30–60 (VAKLIDVTTCIGCKACQVACSEWNDIRDTVG), 91–123 (LEWLIRKDGCMHCSDPGCLKACPAEGAIIQYAN), 124–153 (GIVDFQSEQCIGCGYCIAGCPFDIPRLNPE), and 158–189 (YKCTLCVDRVVVGQEPACVKTCPTGAIHFGTK). Cysteine 39, cysteine 42, cysteine 45, cysteine 49, cysteine 100, cysteine 103, cysteine 108, cysteine 112, cysteine 133, cysteine 136, cysteine 139, cysteine 143, cysteine 160, cysteine 163, cysteine 175, and cysteine 179 together coordinate [4Fe-4S] cluster. A helical transmembrane segment spans residues 261–279 (AAVGFAATFAASIFHYVGV). At 280–300 (GPNRADEEENNLHEEKDEERK) the chain is on the periplasmic side.

As to quaternary structure, formate dehydrogenase is a membrane-bound complex, formed by subunits alpha, beta and gamma. Requires [4Fe-4S] cluster as cofactor.

The protein resides in the cell membrane. Its function is as follows. Allows to use formate as major electron donor during aerobic respiration. The beta chain is an electron transfer unit containing 4 cysteine clusters involved in the formation of iron-sulfur centers. Electrons are transferred from the gamma chain to the molybdenum cofactor of the alpha subunit. This Escherichia coli (strain K12) protein is Formate dehydrogenase-O iron-sulfur subunit (fdoH).